A 405-amino-acid chain; its full sequence is Sialic acid transporter NanX (405 aa).

Over 1–20 (MATAWYKQVNPPQRKALFSA) the chain is Cytoplasmic. Residues 21-41 (WLGYVFDGFDFMMIFYILHII) traverse the membrane as a helical segment. Over 42 to 53 (KADLGITDIQAT) the chain is Periplasmic. A helical membrane pass occupies residues 54-74 (LIGTVAFIARPIGGGFFGAMA). Over 75-80 (DKYGRK) the chain is Cytoplasmic. The helical transmembrane segment at 81–101 (PMMMWAIFIYSVGTGLSGIAT) threads the bilayer. Position 102 (N102) is a topological domain, periplasmic. A helical membrane pass occupies residues 103-123 (LYMLAVCRFIVGLGMSGEYAC). At 124 to 139 (ASTYAVESWPKNLQSK) the chain is on the cytoplasmic side. Residues 140-160 (ASAFLVSGFSVGNIIAAQIIP) traverse the membrane as a helical segment. Over 161–164 (QFAE) the chain is Periplasmic. Residues 165 to 185 (VYGWRNSFFIGLLPVLLVLWI) form a helical membrane-spanning segment. The Cytoplasmic portion of the chain corresponds to 186-214 (RKSAPESQEWIEDKYKDKSTFLSVFRKPH). The chain crosses the membrane as a helical span at residues 215–235 (LSISMIVFLVCFCLFGANWPI). At 236–250 (NGLLPSYLADNGVNT) the chain is on the periplasmic side. The helical transmembrane segment at 251–271 (VVISTLMTIAGLGTLTGTIFF) threads the bilayer. The Cytoplasmic segment spans residues 272–282 (GFVGDKIGVKK). The chain crosses the membrane as a helical span at residues 283 to 303 (AFVVGLITSFIFLCPLFFISV). The Periplasmic segment spans residues 304–307 (KNSS). Residues 308-328 (LIGLCLFGLMFTNLGIAGLVP) traverse the membrane as a helical segment. At 329-344 (KFIYDYFPTKLRGLGT) the chain is on the cytoplasmic side. The chain crosses the membrane as a helical span at residues 345–365 (GLIYNLGATGGMAAPVLATYI). At 366–371 (SGYYGL) the chain is on the periplasmic side. A helical transmembrane segment spans residues 372 to 392 (GVSLFIVTVAFSALLILLVGF). The Cytoplasmic portion of the chain corresponds to 393 to 405 (DIPGKIYKLSVAK).

The protein belongs to the major facilitator superfamily. Sugar transporter (TC 2.A.1.1) family.

The protein resides in the cell inner membrane. In terms of biological role, probably transports across the inner membrane the two dehydrated forms of N-acetylneuraminate (Neu5Ac), 2,7-anhydro-N-acetylneuraminate (2,7-AN) and 2-deoxy-2,3-didehydro-N-acetylneuraminate (2,3-EN). The protein is Sialic acid transporter NanX of Escherichia coli (strain K12).